A 250-amino-acid polypeptide reads, in one-letter code: Ubiquinone/menaquinone biosynthesis C-methyltransferase UbiE (250 aa).

S-adenosyl-L-methionine contacts are provided by residues Thr-73, Asp-94, 122-123 (NA), and Ser-139.

This sequence belongs to the class I-like SAM-binding methyltransferase superfamily. MenG/UbiE family.

The enzyme catalyses a 2-demethylmenaquinol + S-adenosyl-L-methionine = a menaquinol + S-adenosyl-L-homocysteine + H(+). The catalysed reaction is a 2-methoxy-6-(all-trans-polyprenyl)benzene-1,4-diol + S-adenosyl-L-methionine = a 5-methoxy-2-methyl-3-(all-trans-polyprenyl)benzene-1,4-diol + S-adenosyl-L-homocysteine + H(+). It functions in the pathway quinol/quinone metabolism; menaquinone biosynthesis; menaquinol from 1,4-dihydroxy-2-naphthoate: step 2/2. The protein operates within cofactor biosynthesis; ubiquinone biosynthesis. Methyltransferase required for the conversion of demethylmenaquinol (DMKH2) to menaquinol (MKH2) and the conversion of 2-polyprenyl-6-methoxy-1,4-benzoquinol (DDMQH2) to 2-polyprenyl-3-methyl-6-methoxy-1,4-benzoquinol (DMQH2). The protein is Ubiquinone/menaquinone biosynthesis C-methyltransferase UbiE of Francisella tularensis subsp. tularensis (strain WY96-3418).